The following is a 272-amino-acid chain: Type II secretion system protein C (272 aa).

Residues 1–16 (MNISKLPPLSPSVIRR) are Cytoplasmic-facing. A helical transmembrane segment spans residues 17–35 (ILFYLLMLLFCQQLAMIFW). The Periplasmic portion of the chain corresponds to 36-272 (RVGLPDNSPV…DIYMEFGGDE (237 aa)).

This sequence belongs to the GSP C family.

The protein resides in the cell inner membrane. In terms of biological role, involved in a type II secretion system (T2SS, formerly general secretion pathway, GSP) for the export of proteins. Required for the translocation of the multiple pectic enzymes. In Dickeya chrysanthemi (Pectobacterium chrysanthemi), this protein is Type II secretion system protein C (outC).